The following is a 366-amino-acid chain: Cobalt-precorrin-5B C(1)-methyltransferase (366 aa).

This sequence belongs to the CbiD family.

It carries out the reaction Co-precorrin-5B + S-adenosyl-L-methionine = Co-precorrin-6A + S-adenosyl-L-homocysteine. Its pathway is cofactor biosynthesis; adenosylcobalamin biosynthesis; cob(II)yrinate a,c-diamide from sirohydrochlorin (anaerobic route): step 6/10. In terms of biological role, catalyzes the methylation of C-1 in cobalt-precorrin-5B to form cobalt-precorrin-6A. The protein is Cobalt-precorrin-5B C(1)-methyltransferase of Pseudomonas paraeruginosa (strain DSM 24068 / PA7) (Pseudomonas aeruginosa (strain PA7)).